Here is a 363-residue protein sequence, read N- to C-terminus: MKILLFVTLIALAFVALCSAEGNVVVLSPDNFDTVVDGSKTVFVKFYAPWCGHCKKLAPDFEILADTFAPVSNKVVIAKVDCDQADNKALCSKYDVSGYPTLKIFDKSTTAKDYNGARSVDELLTYINNHAKTNVKVKKAPSNVVDLSPSNFDSVVLDKSKNVLVEFYAPWCGHCKKLMPDYEILGNTYANEKDVVIAKIDCDAADNKAICSKYGVTGFPTLKWFGKQSKDGEKYEQGRDLDTFINYINKQAGVNRVKGGKLAVGAGRVEQLDTIATEFIAAAAEVRKELVKKAQTVVDSLPEELRTEGSYYVKVMKTIAEKSIDFVTTEIARITKLVSGSMSGKKADEFAKKLNILESFKSK.

The N-terminal stretch at 1-20 (MKILLFVTLIALAFVALCSA) is a signal peptide. 2 Thioredoxin domains span residues 21–132 (EGNV…NHAK) and 133–285 (TNVK…AAAE). Catalysis depends on nucleophile residues C51, C54, C172, and C175. 2 disulfides stabilise this stretch: C51-C54 and C172-C175.

Belongs to the protein disulfide isomerase family.

Its subcellular location is the endoplasmic reticulum lumen. The enzyme catalyses Catalyzes the rearrangement of -S-S- bonds in proteins.. Functionally, participates in the folding of proteins containing disulfide bonds, may be involved in glycosylation, prolyl hydroxylation and triglyceride transfer. In Dictyostelium discoideum (Social amoeba), this protein is Protein disulfide-isomerase 1 (pdi1).